The primary structure comprises 507 residues: Carnosic acid synthase (507 aa).

Residues 6–23 form a helical membrane-spanning segment; sequence VFSLAFLAAWFIVVFPRW. A heme-binding site is contributed by Cys-450.

Belongs to the cytochrome P450 family. The cofactor is heme. In terms of tissue distribution, expressed in glandular trichomes of young leaves.

The protein resides in the membrane. It catalyses the reaction 11-hydroxyferruginol + 3 reduced [NADPH--hemoprotein reductase] + 3 O2 = carnosate + 3 oxidized [NADPH--hemoprotein reductase] + 4 H2O + 4 H(+). The catalysed reaction is miltiradiene + 2 reduced [NADPH--hemoprotein reductase] + 2 O2 = miltiradien-20-al + 2 oxidized [NADPH--hemoprotein reductase] + 3 H2O + 2 H(+). It carries out the reaction ferruginol + 3 reduced [NADPH--hemoprotein reductase] + 3 O2 = pisiferate + 3 oxidized [NADPH--hemoprotein reductase] + 4 H2O + 4 H(+). It participates in secondary metabolite biosynthesis; terpenoid biosynthesis. Monooxygenase involved in the biosynthesis of carnosate, a potent antioxidant labdane-related diterpene natural product. Catalyzes the oxidation of 11-hydroxyferruginol to produce carnosate. Mediates the conversion of miltiradien into miltiradien-20-al. Also involved in the production of pisiferic acid and derivative products from ferruginol. In Rosmarinus officinalis (Rosemary), this protein is Carnosic acid synthase.